The sequence spans 142 residues: Large ribosomal subunit protein uL11 (142 aa).

Belongs to the universal ribosomal protein uL11 family. Part of the ribosomal stalk of the 50S ribosomal subunit. Interacts with L10 and the large rRNA to form the base of the stalk. L10 forms an elongated spine to which L12 dimers bind in a sequential fashion forming a multimeric L10(L12)X complex. Post-translationally, one or more lysine residues are methylated.

Forms part of the ribosomal stalk which helps the ribosome interact with GTP-bound translation factors. The chain is Large ribosomal subunit protein uL11 from Shewanella baltica (strain OS223).